Here is a 508-residue protein sequence, read N- to C-terminus: Maturase K (508 aa).

The protein belongs to the intron maturase 2 family. MatK subfamily.

Its subcellular location is the plastid. It is found in the chloroplast. In terms of biological role, usually encoded in the trnK tRNA gene intron. Probably assists in splicing its own and other chloroplast group II introns. In Antirrhinum majus (Garden snapdragon), this protein is Maturase K.